The chain runs to 473 residues: H(+)/Cl(-) exchange transporter ClcA (473 aa).

The Cytoplasmic portion of the chain corresponds to 1-32; the sequence is MKTDTSTFLAQQIVRLRRRDQIRRLMQRDKTP. A helical transmembrane segment spans residues 33 to 69; sequence LAILLMAAVVGTLTGLVGVAFEKAVSWVQNMRIGALV. The Periplasmic portion of the chain corresponds to 70–76; that stretch reads QVADHAF. Residues 77–100 traverse the membrane as a helical segment; that stretch reads LLWPLAFILSALLAMVGYFLVRKF. A Selectivity filter part_1 motif is present at residues 106 to 110; sequence GSGIP. Serine 107 contributes to the chloride binding site. An intramembrane region (helical) is located at residues 109–116; sequence IPEIEGAL. Residues 117–123 lie on the Cytoplasmic side of the membrane; that stretch reads EELRPVR. Helical transmembrane passes span 124–141 and 148–166; these read WWRV…TLGA and EGPT…LDVF. The short motif at 146-150 is the Selectivity filter part_2 element; sequence GREGP. Over 167 to 176 the chain is Cytoplasmic; that stretch reads RMRSAEARHT. 2 consecutive intramembrane regions (helical) follow at residues 177-189 and 193-201; these read LLAT…LSAA and PLAGILFII. Residues 202-214 are Cytoplasmic-facing; sequence EEMRPQFRYNLIS. Residues 215 to 232 form a helical membrane-spanning segment; the sequence is IKAVFTGVIMSSIVFRIF. Residues 233 to 252 are Periplasmic-facing; that stretch reads NGEAPIIEVGKLSDAPVNTL. A helical transmembrane segment spans residues 253–281; it reads WLYLILGIIFGCVGPVFNSLVLRTQDMFQ. Residues 282–287 are Cytoplasmic-facing; it reads RFHGGE. The chain crosses the membrane as a helical span at residues 288–309; sequence IKKWVLMGGAIGGLCGILGLIE. Residues 310–329 lie on the Periplasmic side of the membrane; that stretch reads PEAAGGGFNLIPIAAAGNFS. 2 helical membrane passes run 330-349 and 355-376; these read VGLL…LCFS and GIFA…MAAA. A Selectivity filter part_3 motif is present at residues 355-359; the sequence is GIFAP. The chloride site is built by isoleucine 356 and phenylalanine 357. The Periplasmic portion of the chain corresponds to 377 to 386; the sequence is VLFPQYHLEA. The segment at residues 387–401 is an intramembrane region (helical); that stretch reads GTFAIAGMGALMAAS. The note=Loop between two helices intramembrane region spans 402-404; that stretch reads VRA. Residues 405–416 constitute an intramembrane region (helical); the sequence is PLTGIVLVLEMT. The note=Loop between two helices intramembrane region spans 417–421; it reads DNYQL. Residues 422–438 traverse the membrane as a helical segment; the sequence is ILPMIITCLGATLLAQF. Topologically, residues 439-473 are cytoplasmic; it reads LGGKPLYSTILARTLAKQDAEQAAKNQNAPAGENT. Tyrosine 445 lines the chloride pocket.

The protein belongs to the chloride channel (TC 2.A.49) family. ClcA subfamily. As to quaternary structure, homodimer.

The protein localises to the cell inner membrane. The catalysed reaction is 2 chloride(in) + H(+)(out) = 2 chloride(out) + H(+)(in). Functionally, proton-coupled chloride transporter. Functions as antiport system and exchanges two chloride ions for 1 proton. Probably acts as an electrical shunt for an outwardly-directed proton pump that is linked to amino acid decarboxylation, as part of the extreme acid resistance (XAR) response. The protein is H(+)/Cl(-) exchange transporter ClcA of Salmonella newport (strain SL254).